The following is a 307-amino-acid chain: Porphobilinogen deaminase (307 aa).

S-(dipyrrolylmethanemethyl)cysteine is present on C241.

This sequence belongs to the HMBS family. As to quaternary structure, monomer. The cofactor is dipyrromethane.

The catalysed reaction is 4 porphobilinogen + H2O = hydroxymethylbilane + 4 NH4(+). It participates in porphyrin-containing compound metabolism; protoporphyrin-IX biosynthesis; coproporphyrinogen-III from 5-aminolevulinate: step 2/4. Functionally, tetrapolymerization of the monopyrrole PBG into the hydroxymethylbilane pre-uroporphyrinogen in several discrete steps. The protein is Porphobilinogen deaminase of Coxiella burnetii (strain RSA 331 / Henzerling II).